The primary structure comprises 479 residues: MSPQTETKASVGFKAGVKEYKLTYYTPEYETKDTDILAAFRVTPQPGVPPEEAGAAVAAESSTGTWTTVWTDGLTSLDRYKGRCYHIEPVPGEETQFIAYVAYPLDLFEEGSVTNMFTSIVGNVFGFKALAALRLEDLRIPPAYTKTFQGPPHGIQVERDKLNKYGRPLLGCTIKPKLGLSAKNYGRAVYECLRGGLDFTKDDENVNSQPFMRWRDRFLFCAEAIYKSQAETGEIKGHYLNATAGTCEEMIKRAVFARELGVPIVMHDYLTGGFTANTSLAHYCRDNGLLLHIHRAMHAVIDRQKNHGMHFRVLAKALRLSGGDHIHAGTVVGKLEGDRESTLGFVDLLRDDYIEKDRSRGIFFTQDWVSLPGVLPVASGGIHVWHMPALTEIFGDDSVLQFGGGTLGHPWGNAPGAVANRVALEACVQARNEGRDLAVEGNEIVREACKWSPELAAACEVWKEIRFNFPTIDKLDGQE.

The propeptide occupies 1 to 2 (MS). The substrate site is built by Asn123 and Thr173. The Proton acceptor role is filled by Lys175. Lys177 lines the substrate pocket. Lys201, Asp203, and Glu204 together coordinate Mg(2+). Lys201 carries the post-translational modification N6-carboxylysine. Position 208 is a phosphoserine (Ser208). Residue His294 is the Proton acceptor of the active site. Substrate-binding residues include Arg295 and His327. The residue at position 330 (Thr330) is a Phosphothreonine. Ser379 is a substrate binding site.

Belongs to the RuBisCO large chain family. Type I subfamily. As to quaternary structure, heterohexadecamer of 8 large chains and 8 small chains; disulfide-linked. The disulfide link is formed within the large subunit homodimers. The cofactor is Mg(2+). In terms of processing, the disulfide bond which can form in the large chain dimeric partners within the hexadecamer appears to be associated with oxidative stress and protein turnover.

Its subcellular location is the plastid. The protein localises to the chloroplast. It catalyses the reaction 2 (2R)-3-phosphoglycerate + 2 H(+) = D-ribulose 1,5-bisphosphate + CO2 + H2O. The enzyme catalyses D-ribulose 1,5-bisphosphate + O2 = 2-phosphoglycolate + (2R)-3-phosphoglycerate + 2 H(+). In terms of biological role, ruBisCO catalyzes two reactions: the carboxylation of D-ribulose 1,5-bisphosphate, the primary event in carbon dioxide fixation, as well as the oxidative fragmentation of the pentose substrate in the photorespiration process. Both reactions occur simultaneously and in competition at the same active site. The polypeptide is Ribulose bisphosphate carboxylase large chain (Lobularia maritima (Sweet alyssum)).